The following is a 91-amino-acid chain: Small ribosomal subunit protein bS18 (91 aa).

Over residues 1–14 the composition is skewed to low complexity; sequence MTNQNQSQTQTTQT. The disordered stretch occupies residues 1–24; sequence MTNQNQSQTQTTQTVEKVSSRQKK.

This sequence belongs to the bacterial ribosomal protein bS18 family. In terms of assembly, part of the 30S ribosomal subunit. Forms a tight heterodimer with protein bS6.

Binds as a heterodimer with protein bS6 to the central domain of the 16S rRNA, where it helps stabilize the platform of the 30S subunit. The polypeptide is Small ribosomal subunit protein bS18 (Caldicellulosiruptor saccharolyticus (strain ATCC 43494 / DSM 8903 / Tp8T 6331)).